The following is a 245-amino-acid chain: tRNA pseudouridine synthase A (245 aa).

Aspartate 52 (nucleophile) is an active-site residue. Tyrosine 111 contacts substrate.

It belongs to the tRNA pseudouridine synthase TruA family. In terms of assembly, homodimer.

The catalysed reaction is uridine(38/39/40) in tRNA = pseudouridine(38/39/40) in tRNA. Formation of pseudouridine at positions 38, 39 and 40 in the anticodon stem and loop of transfer RNAs. The polypeptide is tRNA pseudouridine synthase A (Nitrobacter hamburgensis (strain DSM 10229 / NCIMB 13809 / X14)).